Here is a 495-residue protein sequence, read N- to C-terminus: Bifunctional protein GlmU (495 aa).

Residues 1–241 (MPQQTAVVVL…AAKVTGVNDR (241 aa)) form a pyrophosphorylase region. UDP-N-acetyl-alpha-D-glucosamine is bound by residues 10-13 (LAAG), K24, Q81, and 86-87 (GT). Residue D112 participates in Mg(2+) binding. Positions 151, 166, 181, and 239 each coordinate UDP-N-acetyl-alpha-D-glucosamine. Residue N239 coordinates Mg(2+). A linker region spans residues 242-262 (VQLSIATRTMNRYILERHMRA). Residues 263 to 495 (GVTIIDPAST…QATEQKDGEQ (233 aa)) form an N-acetyltransferase region. 2 residues coordinate UDP-N-acetyl-alpha-D-glucosamine: R344 and K362. H374 serves as the catalytic Proton acceptor. 2 residues coordinate UDP-N-acetyl-alpha-D-glucosamine: Y377 and N388. Residues A391, 397 to 398 (NY), S416, and A434 contribute to the acetyl-CoA site. The segment at 467-495 (GTAAATAAAQALAADEKSSQATEQKDGEQ) is disordered. The span at 468 to 479 (TAAATAAAQALA) shows a compositional bias: low complexity. A compositionally biased stretch (basic and acidic residues) spans 480–495 (ADEKSSQATEQKDGEQ).

In the N-terminal section; belongs to the N-acetylglucosamine-1-phosphate uridyltransferase family. The protein in the C-terminal section; belongs to the transferase hexapeptide repeat family. In terms of assembly, homotrimer. Mg(2+) serves as cofactor.

The protein resides in the cytoplasm. The enzyme catalyses alpha-D-glucosamine 1-phosphate + acetyl-CoA = N-acetyl-alpha-D-glucosamine 1-phosphate + CoA + H(+). It catalyses the reaction N-acetyl-alpha-D-glucosamine 1-phosphate + UTP + H(+) = UDP-N-acetyl-alpha-D-glucosamine + diphosphate. It participates in nucleotide-sugar biosynthesis; UDP-N-acetyl-alpha-D-glucosamine biosynthesis; N-acetyl-alpha-D-glucosamine 1-phosphate from alpha-D-glucosamine 6-phosphate (route II): step 2/2. It functions in the pathway nucleotide-sugar biosynthesis; UDP-N-acetyl-alpha-D-glucosamine biosynthesis; UDP-N-acetyl-alpha-D-glucosamine from N-acetyl-alpha-D-glucosamine 1-phosphate: step 1/1. Its pathway is bacterial outer membrane biogenesis; LPS lipid A biosynthesis. In terms of biological role, catalyzes the last two sequential reactions in the de novo biosynthetic pathway for UDP-N-acetylglucosamine (UDP-GlcNAc). The C-terminal domain catalyzes the transfer of acetyl group from acetyl coenzyme A to glucosamine-1-phosphate (GlcN-1-P) to produce N-acetylglucosamine-1-phosphate (GlcNAc-1-P), which is converted into UDP-GlcNAc by the transfer of uridine 5-monophosphate (from uridine 5-triphosphate), a reaction catalyzed by the N-terminal domain. In Nocardia farcinica (strain IFM 10152), this protein is Bifunctional protein GlmU.